Consider the following 74-residue polypeptide: uncharacterized protein (74 aa).

A disordered region spans residues 55–74 (DENSESESKDGASWFKVYRG).

This is an uncharacterized protein from Listeria innocua serovar 6a (strain ATCC BAA-680 / CLIP 11262).